Consider the following 173-residue polypeptide: Transcription factor E (173 aa).

Residues 9-92 (ADKAIFAYLH…LWELELDNMY (84 aa)) form the HTH TFE/IIEalpha-type domain.

The protein belongs to the TFE family. As to quaternary structure, monomer. Interaction with RNA polymerase subunits RpoF and RpoE is necessary for Tfe stimulatory transcription activity. Able to interact with Tbp and RNA polymerase in the absence of DNA promoter. Interacts both with the preinitiation and elongation complexes.

In terms of biological role, transcription factor that plays a role in the activation of archaeal genes transcribed by RNA polymerase. Facilitates transcription initiation by enhancing TATA-box recognition by TATA-box-binding protein (Tbp), and transcription factor B (Tfb) and RNA polymerase recruitment. Not absolutely required for transcription in vitro, but particularly important in cases where Tbp or Tfb function is not optimal. It dynamically alters the nucleic acid-binding properties of RNA polymerases by stabilizing the initiation complex and destabilizing elongation complexes. Seems to translocate with the RNA polymerase following initiation and acts by binding to the non template strand of the transcription bubble in elongation complexes. In Methanospirillum hungatei JF-1 (strain ATCC 27890 / DSM 864 / NBRC 100397 / JF-1), this protein is Transcription factor E.